We begin with the raw amino-acid sequence, 613 residues long: Kelch-like protein 36 (613 aa).

Positions 45–112 (CDVVLVVEEQ…LYSSELELDG (68 aa)) constitute a BTB domain. The region spanning 147–249 (YLYLQELASI…PEDILLQRVK (103 aa)) is the BACK domain. Kelch repeat units follow at residues 294–343 (CLLF…VLGG), 344–395 (FIFI…SIED), 396–442 (MLVA…IYKD), 444–491 (VYIS…SLGD), 492–544 (SIYS…VWQG), and 545–593 (RIYI…VCAL).

Interacts with CUL3.

It functions in the pathway protein modification; protein ubiquitination. Functionally, probable substrate-specific adapter of an E3 ubiquitin-protein ligase complex which mediates the ubiquitination and subsequent proteasomal degradation of target proteins. The chain is Kelch-like protein 36 (Klhl36) from Mus musculus (Mouse).